Reading from the N-terminus, the 427-residue chain is Glutamate-1-semialdehyde 2,1-aminomutase (427 aa).

Lysine 266 is modified (N6-(pyridoxal phosphate)lysine).

This sequence belongs to the class-III pyridoxal-phosphate-dependent aminotransferase family. HemL subfamily. As to quaternary structure, homodimer. Pyridoxal 5'-phosphate is required as a cofactor.

It is found in the cytoplasm. It carries out the reaction (S)-4-amino-5-oxopentanoate = 5-aminolevulinate. It participates in porphyrin-containing compound metabolism; protoporphyrin-IX biosynthesis; 5-aminolevulinate from L-glutamyl-tRNA(Glu): step 2/2. This chain is Glutamate-1-semialdehyde 2,1-aminomutase, found in Dechloromonas aromatica (strain RCB).